A 254-amino-acid polypeptide reads, in one-letter code: Proteasome subunit alpha (254 aa).

The disordered stretch occupies residues 232 to 254 (PEVDSSESSNEAEAGAEKGSGES).

It belongs to the peptidase T1A family. As to quaternary structure, the 20S proteasome core is composed of 14 alpha and 14 beta subunits that assemble into four stacked heptameric rings, resulting in a barrel-shaped structure. The two inner rings, each composed of seven catalytic beta subunits, are sandwiched by two outer rings, each composed of seven alpha subunits. The catalytic chamber with the active sites is on the inside of the barrel. Has a gated structure, the ends of the cylinder being occluded by the N-termini of the alpha-subunits. Is capped by the proteasome-associated ATPase, ARC.

The protein localises to the cytoplasm. It functions in the pathway protein degradation; proteasomal Pup-dependent pathway. Its activity is regulated as follows. The formation of the proteasomal ATPase ARC-20S proteasome complex, likely via the docking of the C-termini of ARC into the intersubunit pockets in the alpha-rings, may trigger opening of the gate for substrate entry. Interconversion between the open-gate and close-gate conformations leads to a dynamic regulation of the 20S proteasome proteolysis activity. Component of the proteasome core, a large protease complex with broad specificity involved in protein degradation. This chain is Proteasome subunit alpha, found in Mycolicibacterium vanbaalenii (strain DSM 7251 / JCM 13017 / BCRC 16820 / KCTC 9966 / NRRL B-24157 / PYR-1) (Mycobacterium vanbaalenii).